The following is a 113-amino-acid chain: Class I hydrophobin POH1 (113 aa).

The first 26 residues, 1-26 (MFSIRISTVVLAASALLAVAIPMTNT), serve as a signal peptide directing secretion. 4 disulfides stabilise this stretch: cysteine 31–cysteine 93, cysteine 38–cysteine 87, cysteine 39–cysteine 74, and cysteine 94–cysteine 107.

The protein belongs to the fungal hydrophobin family. In terms of assembly, self-assembles to form functional amyloid fibrils called rodlets. Self-assembly into fibrillar rodlets occurs spontaneously at hydrophobic:hydrophilic interfaces and the rodlets further associate laterally to form amphipathic monolayers. As to expression, expressed in the fruiting bodies but not in vegetative mycelium.

The protein resides in the secreted. It localises to the cell wall. Its function is as follows. Aerial growth, conidiation, and dispersal of filamentous fungi in the environment rely upon a capability of their secreting small amphipathic proteins called hydrophobins (HPBs) with low sequence identity. Class I can self-assemble into an outermost layer of rodlet bundles on aerial cell surfaces, conferring cellular hydrophobicity that supports fungal growth, development and dispersal; whereas Class II form highly ordered films at water-air interfaces through intermolecular interactions but contribute nothing to the rodlet structure. POH1 is a class I hydrophobin that is involved in the formation of mycelium knots and subsequent fruiting bodies. This chain is Class I hydrophobin POH1, found in Pleurotus ostreatus (Oyster mushroom).